A 113-amino-acid chain; its full sequence is MNLLDKVDAASLRDDIPAFRPGDTLNVHVKVIEGSKSRIQVFKGVVIRRQGAGVRETFTIRKVSFGIGVERTFPVHTPNIDKIEVVTRGDVRRAKLYYLRDLRGKAAKIKEKR.

It belongs to the bacterial ribosomal protein bL19 family.

In terms of biological role, this protein is located at the 30S-50S ribosomal subunit interface and may play a role in the structure and function of the aminoacyl-tRNA binding site. The chain is Large ribosomal subunit protein bL19 from Corynebacterium diphtheriae (strain ATCC 700971 / NCTC 13129 / Biotype gravis).